A 908-amino-acid polypeptide reads, in one-letter code: MVCEGKRSASCPCFFLLTAKFYWILTMMQRTHSQEYAHSIRVDGDIILGGLFPVHAKGERGVPCGELKKEKGIHRLEAMLYAIDQINKDPDLLSNITLGVRILDTCSRDTYALEQSLTFVQALIEKDASDVKCANGDPPIFTKPDKISGVIGAAASSVSIMVANILRLFKIPQISYASTAPELSDNTRYDFFSRVVPPDSYQAQAMVDIVTALGWNYVSTLASEGNYGESGVEAFTQISREIGGVCIAQSQKIPREPRPGEFEKIIKRLLETPNARAVIMFANEDDIRRILEAAKKLNQSGHFLWIGSDSWGSKIAPVYQQEEIAEGAVTILPKRASIDGFDRYFRSRTLANNRRNVWFAEFWEENFGCKLGSHGKRNSHIKKCTGLERIARDSSYEQEGKVQFVIDAVYSMAYALHNMHKDLCPGYIGLCPRMSTIDGKELLGYIRAVNFNGSAGTPVTFNENGDAPGRYDIFQYQITNKSTEYKVIGHWTNQLHLKVEDMQWAHREHTHPASVCSLPCKPGERKKTVKGVPCCWHCERCEGYNYQVDELSCELCPLDQRPNMNRTGCQLIPIIKLEWHSPWAVVPVFVAILGIIATTFVIVTFVRYNDTPIVRASGRELSYVLLTGIFLCYSITFLMIAAPDTIICSFRRVFLGLGMCFSYAALLTKTNRIHRIFEQGKKSVTAPKFISPASQLVITFSLISVQLLGVFVWFVVDPPHIIIDYGEQRTLDPEKARGVLKCDISDLSLICSLGYSILLMVTCTVYAIKTRGVPETFNEAKPIGFTMYTTCIIWLAFIPIFFGTAQSAEKMYIQTTTLTVSMSLSASVSLGMLYMPKVYIIIFHPEQNVQKRKRSFKAVVTAATMQSKLIQKGNDRPNGEVKSELCESLETNTSSTKTTYISYSNHSI.

The signal sequence occupies residues 1-33 (MVCEGKRSASCPCFFLLTAKFYWILTMMQRTHS). Over 34-583 (QEYAHSIRVD…IIKLEWHSPW (550 aa)) the chain is Extracellular. A disulfide bridge connects residues Cys-64 and Cys-106. N-linked (GlcNAc...) asparagine glycosylation occurs at Asn-95. L-glutamate is bound by residues Ser-156, 177 to 179 (AST), and Tyr-227. 7 disulfides stabilise this stretch: Cys-246–Cys-534, Cys-369–Cys-384, Cys-424–Cys-431, Cys-516–Cys-535, Cys-520–Cys-538, Cys-541–Cys-553, and Cys-556–Cys-569. An N-linked (GlcNAc...) asparagine glycan is attached at Asn-298. An L-glutamate-binding site is contributed by Asp-309. Residue Lys-401 participates in L-glutamate binding. N-linked (GlcNAc...) asparagine glycans are attached at residues Asn-452 and Asn-480. Asn-565 is a glycosylation site (N-linked (GlcNAc...) asparagine). A helical membrane pass occupies residues 584 to 608 (AVVPVFVAILGIIATTFVIVTFVRY). The Cytoplasmic portion of the chain corresponds to 609 to 620 (NDTPIVRASGRE). Residues 621–641 (LSYVLLTGIFLCYSITFLMIA) traverse the membrane as a helical segment. Residues 642–647 (APDTII) are Extracellular-facing. The chain crosses the membrane as a helical span at residues 648–668 (CSFRRVFLGLGMCFSYAALLT). At 669-695 (KTNRIHRIFEQGKKSVTAPKFISPASQ) the chain is on the cytoplasmic side. The helical transmembrane segment at 696–716 (LVITFSLISVQLLGVFVWFVV) threads the bilayer. Residues 717–746 (DPPHIIIDYGEQRTLDPEKARGVLKCDISD) lie on the Extracellular side of the membrane. Residues 747–768 (LSLICSLGYSILLMVTCTVYAI) form a helical membrane-spanning segment. Over 769–781 (KTRGVPETFNEAK) the chain is Cytoplasmic. A helical transmembrane segment spans residues 782 to 803 (PIGFTMYTTCIIWLAFIPIFFG). Residues 804–818 (TAQSAEKMYIQTTTL) lie on the Extracellular side of the membrane. The chain crosses the membrane as a helical span at residues 819–843 (TVSMSLSASVSLGMLYMPKVYIIIF). Topologically, residues 844-908 (HPEQNVQKRK…TYISYSNHSI (65 aa)) are cytoplasmic. A Glycyl lysine isopeptide (Lys-Gly) (interchain with G-Cter in SUMO1) cross-link involves residue Lys-882.

This sequence belongs to the G-protein coupled receptor 3 family. In terms of assembly, interacts with PICK1.

Its subcellular location is the cell membrane. G-protein coupled receptor for glutamate. Ligand binding causes a conformation change that triggers signaling via guanine nucleotide-binding proteins (G proteins) and modulates the activity of down-stream effectors, such as adenylate cyclase. Signaling inhibits adenylate cyclase activity. The polypeptide is Metabotropic glutamate receptor 8 (GRM8) (Homo sapiens (Human)).